The primary structure comprises 1033 residues: SIT4-associating protein SAP190 (1033 aa).

Disordered regions lie at residues 32-82, 147-213, 768-813, and 828-1033; these read DQDD…TTES, PEII…QVET, FGND…HDSG, and ENEE…KEAF. Basic and acidic residues predominate over residues 158-170; the sequence is ILIERDRKDKKED. Acidic residues predominate over residues 171–182; the sequence is AEEGGDSEETTN. Residues 183–195 show a composition bias toward basic and acidic residues; that stretch reads DSDHDSGDERSVD. Ser-774 bears the Phosphoserine mark. 2 stretches are compositionally biased toward acidic residues: residues 784 to 793 and 828 to 838; these read SEDIIGDTEG and ENEEDYAEYSD. A phosphoserine mark is found at Ser-857, Ser-862, and Ser-892. Residues 858–879 are compositionally biased toward basic and acidic residues; the sequence is DDGKSKSAESEFTDKISEHRDG. The span at 909-924 shows a compositional bias: polar residues; that stretch reads SRSQPSDPKLQDQNIF. A compositionally biased stretch (acidic residues) spans 932–944; the sequence is GVGDDDDYMDPND. The residue at position 990 (Thr-990) is a Phosphothreonine. Ser-991 is modified (phosphoserine). Residues 1000–1018 are compositionally biased toward acidic residues; the sequence is ISSDEEDSEDEDEENDMGN.

It belongs to the SAPS family. In terms of assembly, associates with the SIT4 protein phosphatase catalytic subunit in a cell-cycle-dependent manner. Hyperphosphorylated in the absence of SIT4.

The protein resides in the cytoplasm. Positive regulator of protein phosphatase SIT4. Involved in the general amino acid control (GAAC) response regulated by TOR. Involved in the dephosphorylation of the elongator complex subunit IKI3. The chain is SIT4-associating protein SAP190 (SAP190) from Saccharomyces cerevisiae (strain AWRI1631) (Baker's yeast).